Reading from the N-terminus, the 203-residue chain is FMN-dependent NADH:quinone oxidoreductase 1 (203 aa).

FMN is bound by residues serine 9, 15–17, 95–98, and 139–142; these read SAS, MYNF, and TAGG.

It belongs to the azoreductase type 1 family. As to quaternary structure, homodimer. Requires FMN as cofactor.

The enzyme catalyses 2 a quinone + NADH + H(+) = 2 a 1,4-benzosemiquinone + NAD(+). It carries out the reaction N,N-dimethyl-1,4-phenylenediamine + anthranilate + 2 NAD(+) = 2-(4-dimethylaminophenyl)diazenylbenzoate + 2 NADH + 2 H(+). Functionally, quinone reductase that provides resistance to thiol-specific stress caused by electrophilic quinones. In terms of biological role, also exhibits azoreductase activity. Catalyzes the reductive cleavage of the azo bond in aromatic azo compounds to the corresponding amines. This is FMN-dependent NADH:quinone oxidoreductase 1 from Pseudomonas putida (strain ATCC 47054 / DSM 6125 / CFBP 8728 / NCIMB 11950 / KT2440).